Consider the following 367-residue polypeptide: Alanine racemase (367 aa).

Catalysis depends on lysine 35, which acts as the Proton acceptor; specific for D-alanine. Residue lysine 35 is modified to N6-(pyridoxal phosphate)lysine. Arginine 130 provides a ligand contact to substrate. Catalysis depends on tyrosine 259, which acts as the Proton acceptor; specific for L-alanine. Methionine 307 is a binding site for substrate.

Belongs to the alanine racemase family. The cofactor is pyridoxal 5'-phosphate.

It carries out the reaction L-alanine = D-alanine. The protein operates within amino-acid biosynthesis; D-alanine biosynthesis; D-alanine from L-alanine: step 1/1. Catalyzes the interconversion of L-alanine and D-alanine. May also act on other amino acids. The polypeptide is Alanine racemase (alr) (Delftia acidovorans (strain DSM 14801 / SPH-1)).